A 241-amino-acid chain; its full sequence is 1-(5-phosphoribosyl)-5-[(5-phosphoribosylamino)methylideneamino] imidazole-4-carboxamide isomerase (241 aa).

Catalysis depends on aspartate 8, which acts as the Proton acceptor. Aspartate 129 functions as the Proton donor in the catalytic mechanism.

Belongs to the HisA/HisF family.

It localises to the cytoplasm. It catalyses the reaction 1-(5-phospho-beta-D-ribosyl)-5-[(5-phospho-beta-D-ribosylamino)methylideneamino]imidazole-4-carboxamide = 5-[(5-phospho-1-deoxy-D-ribulos-1-ylimino)methylamino]-1-(5-phospho-beta-D-ribosyl)imidazole-4-carboxamide. Its pathway is amino-acid biosynthesis; L-histidine biosynthesis; L-histidine from 5-phospho-alpha-D-ribose 1-diphosphate: step 4/9. The chain is 1-(5-phosphoribosyl)-5-[(5-phosphoribosylamino)methylideneamino] imidazole-4-carboxamide isomerase from Chloroflexus aurantiacus (strain ATCC 29364 / DSM 637 / Y-400-fl).